The following is a 546-amino-acid chain: Chaperonin GroEL (546 aa).

ATP-binding positions include 30 to 33 (TLGP), Lys51, 87 to 91 (DGTTT), Gly415, and Asp495.

The protein belongs to the chaperonin (HSP60) family. As to quaternary structure, forms a cylinder of 14 subunits composed of two heptameric rings stacked back-to-back. Interacts with the co-chaperonin GroES.

It localises to the cytoplasm. It catalyses the reaction ATP + H2O + a folded polypeptide = ADP + phosphate + an unfolded polypeptide.. Together with its co-chaperonin GroES, plays an essential role in assisting protein folding. The GroEL-GroES system forms a nano-cage that allows encapsulation of the non-native substrate proteins and provides a physical environment optimized to promote and accelerate protein folding. In Brucella melitensis biotype 2 (strain ATCC 23457), this protein is Chaperonin GroEL.